Here is a 463-residue protein sequence, read N- to C-terminus: Glutamate-1-semialdehyde 2,1-aminomutase, chloroplastic (463 aa).

Residues 1–30 (MQMQLNAKTVQGAFKAQRPRSVRGNVAVRA) constitute a chloroplast transit peptide. An N6-(pyridoxal phosphate)lysine modification is found at K303.

It belongs to the class-III pyridoxal-phosphate-dependent aminotransferase family. HemL subfamily. In terms of assembly, homodimer. Requires pyridoxal 5'-phosphate as cofactor.

Its subcellular location is the plastid. It localises to the chloroplast. It carries out the reaction (S)-4-amino-5-oxopentanoate = 5-aminolevulinate. Its pathway is porphyrin-containing compound metabolism; protoporphyrin-IX biosynthesis; 5-aminolevulinate from L-glutamyl-tRNA(Glu): step 2/2. It functions in the pathway porphyrin-containing compound metabolism; chlorophyll biosynthesis. The sequence is that of Glutamate-1-semialdehyde 2,1-aminomutase, chloroplastic (GSA) from Chlamydomonas reinhardtii (Chlamydomonas smithii).